A 177-amino-acid chain; its full sequence is Large ribosomal subunit protein uL6 (177 aa).

Belongs to the universal ribosomal protein uL6 family. As to quaternary structure, part of the 50S ribosomal subunit.

Functionally, this protein binds to the 23S rRNA, and is important in its secondary structure. It is located near the subunit interface in the base of the L7/L12 stalk, and near the tRNA binding site of the peptidyltransferase center. This Rhizobium etli (strain CIAT 652) protein is Large ribosomal subunit protein uL6.